We begin with the raw amino-acid sequence, 422 residues long: MSKKIQAIRGMSDLLPKDSAFWLSLERTIFDLFISYGYQNIRTPIVEKTDTFCRAIGGATDIVEKEMYSWIESGGESLSLNPEGTAGCVRMMIEHNLPREGIQKVFYQGAMFRRERPQKGRYRQFHQVGLEVFGATNAKVDAELMMITHTLWQVLGLKNIVLEINTLGSSETRVAYRKILIAYFNQYKDQLDENSLKRLKTNPLRILDSKNKAMRSLINNAPKLMDYLDKESAQHFEQFKTYLDALNVTYIINTCLVRGLDYYNRTVFEWTTTNLGAQGTICAGGRYDGLVEKMGGIPTPAVGLAIGLERLILLLEVQNLMAIEPTLSIYLVALGEKAQIKSMQIASTLHDALPNVILYNDLTLGSFKSQLKKANKIKAYFALILGEQELNNNQVSIKPLKGQGTQQTMDLEEAIKYLKENK.

This sequence belongs to the class-II aminoacyl-tRNA synthetase family. As to quaternary structure, homodimer.

The protein resides in the cytoplasm. It catalyses the reaction tRNA(His) + L-histidine + ATP = L-histidyl-tRNA(His) + AMP + diphosphate + H(+). The protein is Histidine--tRNA ligase of Ruthia magnifica subsp. Calyptogena magnifica.